Consider the following 458-residue polypeptide: Neuronal acetylcholine receptor subunit beta-3 (458 aa).

An N-terminal signal peptide occupies residues 1–21 (MLPDFMLVLIVLGIPSSATTG). Over 22-237 (FNSIAENEDA…VLRRLPLFYT (216 aa)) the chain is Extracellular. N-linked (GlcNAc...) asparagine glycosylation is found at asparagine 51, asparagine 138, and asparagine 166. Cysteine 153 and cysteine 167 are oxidised to a cystine. Transmembrane regions (helical) follow at residues 238–258 (LFLIIPCLGLSFLTVLVFYLP), 267–287 (LSTSVLVSLTVFLLVIEEIIP), and 300–320 (LLFIMIFVTLSIIVTVFVINV). At 321–428 (HHRSSSTYHP…WKFVAQVLDR (108 aa)) the chain is on the cytoplasmic side. A helical membrane pass occupies residues 429–449 (IFLWLFLIVSVTGSVLIFTPA).

The protein belongs to the ligand-gated ion channel (TC 1.A.9) family. Acetylcholine receptor (TC 1.A.9.1) subfamily. Beta-3/CHRNB3 sub-subfamily. In terms of assembly, neuronal AChR seems to be composed of two different type of subunits: alpha and beta. CHRNB3/beta-3 subunit is only able to form functional nAChRs when co-assembled with another beta subunit. Participates in pentameric assemblies along with CHRNA4/alpha-4 and CHRNB2/beta-2 subunits and with CHRNA6/alpha-6 as well, forming stoichiometries such as (CHRNA3:CHRNB4)2:CHRNB3, (CHRNA4:CHRNB2)2:CHRNB3 or (CHRNA6:CHRNB2)2:CHRNB3.

It localises to the synaptic cell membrane. The protein resides in the cell membrane. It carries out the reaction Ca(2+)(in) = Ca(2+)(out). The catalysed reaction is K(+)(in) = K(+)(out). It catalyses the reaction Na(+)(in) = Na(+)(out). Activated by a myriad of ligands such as acetylcholine, cytisine, nicotine, choline and epibatidine. Component of neuronal acetylcholine receptors (nAChRs) that function as pentameric, ligand-gated cation channels with high calcium permeability among other activities. nAChRs are excitatory neurotrasnmitter receptors formed by a collection of nAChR subunits known to mediate synaptic transmission in the nervous system and the neuromuscular junction. Each nAchR subunit confers differential attributes to channel properties, including activation, deactivation and desensitization kinetics, pH sensitivity, cation permeability, and binding to allosteric modulators. Has an accessory rather than functional role and is only able to form functional nAChRs when co-assembled with another beta subunit. Participates in pentameric assemblies along with CHRNA3, CHRNA4, CHRNA6, CHRNB2 and CHRNB4. Modulates receptor assembly and increases receptor sensitivity to nicotine when associated with CHRNB2, CHRNA4 and/or CHRNA6 as well as CHRNA3 and CHRNB4. Seems to play a role in nicotine addiction. The protein is Neuronal acetylcholine receptor subunit beta-3 of Homo sapiens (Human).